The primary structure comprises 176 residues: RNA 2',3'-cyclic phosphodiesterase (176 aa).

The Proton donor role is filled by histidine 39. 2 short sequence motifs (HXTX) span residues 39–42 and 122–125; these read HITL and HLTV. Histidine 122 acts as the Proton acceptor in catalysis.

It belongs to the 2H phosphoesterase superfamily. ThpR family.

It catalyses the reaction a 3'-end 2',3'-cyclophospho-ribonucleotide-RNA + H2O = a 3'-end 2'-phospho-ribonucleotide-RNA + H(+). In terms of biological role, hydrolyzes RNA 2',3'-cyclic phosphodiester to an RNA 2'-phosphomonoester. The polypeptide is RNA 2',3'-cyclic phosphodiesterase (Archaeoglobus fulgidus (strain ATCC 49558 / DSM 4304 / JCM 9628 / NBRC 100126 / VC-16)).